The following is a 682-amino-acid chain: K(+)-insensitive pyrophosphate-energized proton pump 2 (682 aa).

5 helical membrane passes run Met1–Met21, Thr56–His76, Ala78–Val98, Leu130–Ala150, and Ile160–Ile180. Lys183 is a substrate binding site. 3 residues coordinate Mg(2+): Asp186, Asp190, and Asp216. Transmembrane regions (helical) follow at residues Ile237–Phe257, Pro258–Ala278, Gly291–Leu311, Phe318–Ile338, Ile353–Phe373, Ser375–Leu395, and Leu404–Met424. Residue Asp432 participates in Mg(2+) binding. 4 helical membrane-spanning segments follow: residues Tyr468 to Val488, Glu506 to Ile526, Met574 to Ala594, and Glu595 to Leu615. The Ca(2+) site is built by Asp623, Asp649, and Asp653. Lys656 contacts substrate. The chain crosses the membrane as a helical span at residues Ser662–Ile682.

Belongs to the H(+)-translocating pyrophosphatase (TC 3.A.10) family. K(+)-insensitive subfamily. Homodimer. Requires Mg(2+) as cofactor.

The protein localises to the cell membrane. It carries out the reaction diphosphate + H2O + H(+)(in) = 2 phosphate + 2 H(+)(out). Functionally, proton pump that utilizes the energy of pyrophosphate hydrolysis as the driving force for proton movement across the membrane. Generates a proton motive force. The polypeptide is K(+)-insensitive pyrophosphate-energized proton pump 2 (Moorella thermoacetica (strain ATCC 39073 / JCM 9320)).